The following is a 336-amino-acid chain: Dihydroorotate dehydrogenase (quinone) (336 aa).

FMN contacts are provided by residues 62-66 (AGLDK) and Thr86. Lys66 is a binding site for substrate. Position 111–115 (111–115 (NRMGF)) interacts with substrate. FMN is bound by residues Asn139 and Asn172. Asn172 is a substrate binding site. Ser175 functions as the Nucleophile in the catalytic mechanism. Substrate is bound at residue Asn177. Lys217 and Thr245 together coordinate FMN. 246–247 (NT) is a binding site for substrate. FMN-binding positions include Gly268, Gly297, and 318–319 (YS).

This sequence belongs to the dihydroorotate dehydrogenase family. Type 2 subfamily. In terms of assembly, monomer. FMN serves as cofactor.

It localises to the cell membrane. It carries out the reaction (S)-dihydroorotate + a quinone = orotate + a quinol. The protein operates within pyrimidine metabolism; UMP biosynthesis via de novo pathway; orotate from (S)-dihydroorotate (quinone route): step 1/1. Catalyzes the conversion of dihydroorotate to orotate with quinone as electron acceptor. This is Dihydroorotate dehydrogenase (quinone) from Escherichia coli (strain UTI89 / UPEC).